Reading from the N-terminus, the 714-residue chain is Fatty acid oxidation complex subunit alpha (714 aa).

The interval 1-190 (MEMASAFTLN…KLGLVDDVVP (190 aa)) is enoyl-CoA hydratase. The tract at residues 306–714 (APLNSVGILG…FWKTTATDLQ (409 aa)) is 3-hydroxyacyl-CoA dehydrogenase.

The protein in the N-terminal section; belongs to the enoyl-CoA hydratase/isomerase family. This sequence in the central section; belongs to the 3-hydroxyacyl-CoA dehydrogenase family. In terms of assembly, heterotetramer of two alpha chains (FadJ) and two beta chains (FadI).

It is found in the cytoplasm. The enzyme catalyses a (3S)-3-hydroxyacyl-CoA = a (2E)-enoyl-CoA + H2O. It carries out the reaction a 4-saturated-(3S)-3-hydroxyacyl-CoA = a (3E)-enoyl-CoA + H2O. It catalyses the reaction a (3S)-3-hydroxyacyl-CoA + NAD(+) = a 3-oxoacyl-CoA + NADH + H(+). The catalysed reaction is (3S)-3-hydroxybutanoyl-CoA = (3R)-3-hydroxybutanoyl-CoA. It functions in the pathway lipid metabolism; fatty acid beta-oxidation. Its function is as follows. Catalyzes the formation of a hydroxyacyl-CoA by addition of water on enoyl-CoA. Also exhibits 3-hydroxyacyl-CoA epimerase and 3-hydroxyacyl-CoA dehydrogenase activities. The sequence is that of Fatty acid oxidation complex subunit alpha from Shigella boydii serotype 18 (strain CDC 3083-94 / BS512).